Consider the following 581-residue polypeptide: Zinc metalloproteinase nas-36 (581 aa).

Residues Met1–Arg95 constitute a propeptide that is removed on maturation. N-linked (GlcNAc...) asparagine glycosylation is present at Asn67. The 194-residue stretch at Ala97–Lys290 folds into the Peptidase M12A domain. 5 cysteine pairs are disulfide-bonded: Cys137–Cys289, Cys159–Cys178, Cys293–Cys313, Cys315–Cys324, and Cys336–Cys364. His186 is a binding site for Zn(2+). Glu187 is a catalytic residue. Zn(2+) contacts are provided by His190 and His196. An EGF-like domain is found at Asn285–Glu325. Residues Cys336–Thr449 form the CUB domain. A glycan (N-linked (GlcNAc...) asparagine) is linked at Asn418. One can recognise a TSP type-1 domain in the interval Asn474 to Pro523. 3 cysteine pairs are disulfide-bonded: Cys486-Cys517, Cys490-Cys522, and Cys502-Cys507.

Zn(2+) is required as a cofactor.

The protein resides in the secreted. With respect to regulation, inhibited by 1,10-phenanthroline. Metalloprotease. Involved in molting, a process during larval stages in which a new cuticle is formed and the old cuticle is shed. This chain is Zinc metalloproteinase nas-36, found in Brugia malayi (Filarial nematode worm).